A 208-amino-acid chain; its full sequence is Large ribosomal subunit protein bL25 (208 aa).

A disordered region spans residues 163–208 (DYSYNHEPDEVVASILPPQKQEETEAESAAQDVEEPEKGTEEEKEE). The span at 198–208 (PEKGTEEEKEE) shows a compositional bias: basic and acidic residues.

The protein belongs to the bacterial ribosomal protein bL25 family. CTC subfamily. Part of the 50S ribosomal subunit; part of the 5S rRNA/L5/L18/L25 subcomplex. Contacts the 5S rRNA. Binds to the 5S rRNA independently of L5 and L18.

In terms of biological role, this is one of the proteins that binds to the 5S RNA in the ribosome where it forms part of the central protuberance. This Bacillus licheniformis (strain ATCC 14580 / DSM 13 / JCM 2505 / CCUG 7422 / NBRC 12200 / NCIMB 9375 / NCTC 10341 / NRRL NRS-1264 / Gibson 46) protein is Large ribosomal subunit protein bL25.